Consider the following 117-residue polypeptide: Minor capsid protein p17 (117 aa).

The N-linked (GlcNAc...) asparagine; by host glycan is linked to Asn-12. A helical membrane pass occupies residues 39–59 (AILLGILILLVIILIIVAIVY). The tract at residues 96–117 (KNSTSQQSHIPSDEQLAELAHS) is disordered. Asn-97 is a glycosylation site (N-linked (GlcNAc...) asparagine; by host).

The protein belongs to the asfivirus minor capsid protein p17 family. Interacts with the minor capsid protein M1249L and with the hexon capsid protein p72 capsomers; these interactions form a rigid zipper structure that stabilizes the capsomers. Interacts with host STING1.

The protein localises to the virion membrane. It is found in the host endoplasmic reticulum membrane. In terms of biological role, together with the penton and the other minor capsid proteins (M1249L, p49), forms a complicated network immediately below the outer capsid shell, stabilizing the whole capsid. Three copies of p17 encircle each p72 capsomer in the inner capsid shell, anchoring p72 capsomers on the inner membrane. Required for the assembly of the capsid and icosahedral morphogenesis. Additionally, inhibits the host cGAS-STING pathway through its interaction with STING1 and subsequent interference of the recruitment of downstream components TBK1 and IKBKE. The sequence is that of Minor capsid protein p17 from African swine fever virus (isolate Tick/South Africa/Pretoriuskop Pr4/1996) (ASFV).